Reading from the N-terminus, the 794-residue chain is PAN2-PAN3 deadenylation complex subunit PAN3 (794 aa).

A C3H1-type zinc finger spans residues 7 to 36; that stretch reads SAKDVLCKNILIYGYCKFQDKGCAFSHNKQ. 2 disordered regions span residues 40 to 97 and 187 to 226; these read PQQQ…TQSK and AQVG…QQQL. 2 stretches are compositionally biased toward polar residues: residues 83–94 and 189–199; these read IQSNGMVNSQET and VGNNPGSTAPA. Residues 200–226 are compositionally biased toward low complexity; that stretch reads NLQLQQKQPQQPQQPQQPQQHQQQQQL. Positions 372–668 are pseudokinase domain; that stretch reads QTMQHLSLPD…MDQFILQYIS (297 aa). ATP-binding positions include arginine 425 and 494–501; that span reads DYYPNLTT. Positions 669 to 707 form a coiled coil; that stretch reads SHFMTLMNKLQNSHDWVELQLSTELENARLFRLMTKINF. The tract at residues 708–794 is knob domain; that stretch reads IISEMPTYDL…IDTQFRLLRG (87 aa).

The protein belongs to the protein kinase superfamily. PAN3 family. In terms of assembly, homodimer. Forms a heterotrimer with a catalytic subunit PAN2 to form the poly(A)-nuclease (PAN) deadenylation complex. Interacts (via PAM-2 motif) with poly(A)-binding protein PAB1 (via PABC domain), conferring substrate specificity of the enzyme complex.

The protein localises to the cytoplasm. Its function is as follows. Regulatory subunit of the poly(A)-nuclease (PAN) deadenylation complex, one of two cytoplasmic mRNA deadenylases involved in mRNA turnover. PAN specifically shortens poly(A) tails of RNA and the activity is stimulated by poly(A)-binding protein PAB1. PAN deadenylation is followed by rapid degradation of the shortened mRNA tails by the CCR4-NOT complex. Deadenylated mRNAs are then degraded by two alternative mechanisms, namely exosome-mediated 3'-5' exonucleolytic degradation, or deadenylation-dependent mRNA decaping and subsequent 5'-3' exonucleolytic degradation by XRN1. May also be involved in post-transcriptional maturation of mRNA poly(A) tails. PAN3 acts as a positive regulator for PAN activity, recruiting the catalytic subunit PAN2 to mRNA via its interaction with RNA and with PAB1. In Lodderomyces elongisporus (strain ATCC 11503 / CBS 2605 / JCM 1781 / NBRC 1676 / NRRL YB-4239) (Yeast), this protein is PAN2-PAN3 deadenylation complex subunit PAN3.